The primary structure comprises 105 residues: Heat shock protein HspQ (105 aa).

The protein belongs to the HspQ family.

The protein localises to the cytoplasm. Its function is as follows. Involved in the degradation of certain denaturated proteins, including DnaA, during heat shock stress. This Blochmanniella pennsylvanica (strain BPEN) protein is Heat shock protein HspQ.